The sequence spans 106 residues: YcgL domain-containing protein PsycPRwf_1721 (106 aa).

One can recognise a YcgL domain in the interval 1–94; that stretch reads MHCDIYKFPK…PSDVLLAQAQ (94 aa).

This Psychrobacter sp. (strain PRwf-1) protein is YcgL domain-containing protein PsycPRwf_1721.